A 358-amino-acid polypeptide reads, in one-letter code: Nicotinate-nucleotide--dimethylbenzimidazole phosphoribosyltransferase (358 aa).

Glu-323 serves as the catalytic Proton acceptor.

This sequence belongs to the CobT family.

It catalyses the reaction 5,6-dimethylbenzimidazole + nicotinate beta-D-ribonucleotide = alpha-ribazole 5'-phosphate + nicotinate + H(+). Its pathway is nucleoside biosynthesis; alpha-ribazole biosynthesis; alpha-ribazole from 5,6-dimethylbenzimidazole: step 1/2. Its function is as follows. Catalyzes the synthesis of alpha-ribazole-5'-phosphate from nicotinate mononucleotide (NAMN) and 5,6-dimethylbenzimidazole (DMB). This chain is Nicotinate-nucleotide--dimethylbenzimidazole phosphoribosyltransferase, found in Oleidesulfovibrio alaskensis (strain ATCC BAA-1058 / DSM 17464 / G20) (Desulfovibrio alaskensis).